We begin with the raw amino-acid sequence, 851 residues long: Phosphatidylinositol 4-kinase pik1 (851 aa).

Residues 1–123 (MPSSNSGNEL…KICKRLYNRI (123 aa)) form the PIK helical domain. Serine 202, serine 219, serine 222, and serine 235 each carry phosphoserine. Tyrosine 236 is subject to Phosphotyrosine. The segment at 384 to 404 (LQDSTDNDISESESEGGDLSM) is disordered. Residues 388-399 (TDNDISESESEG) are compositionally biased toward acidic residues. A PI3K/PI4K catalytic domain is found at 558–836 (YAKKERIRKS…LIQKANCSVW (279 aa)). Residues 564 to 570 (IRKSSPY) are G-loop. Residues 706–714 (QLKDRHNGN) are catalytic loop. Residues 725–749 (HIDFGFLLTNTPGNVGFESAPFKLT) are activation loop.

Belongs to the PI3/PI4-kinase family. Interacts with cdc4 and cam2.

The protein localises to the golgi apparatus. It localises to the nucleus. It catalyses the reaction a 1,2-diacyl-sn-glycero-3-phospho-(1D-myo-inositol) + ATP = a 1,2-diacyl-sn-glycero-3-phospho-(1D-myo-inositol 4-phosphate) + ADP + H(+). Functionally, acts on phosphatidylinositol (PI) in the first committed step in the production of the second messenger inositol 1,4,5,-trisphosphate. PIK1 is part of a nuclear phosphoinositide cycle and could control cytokinesis through the actin cytoskeleton. This is Phosphatidylinositol 4-kinase pik1 (pik1) from Schizosaccharomyces pombe (strain 972 / ATCC 24843) (Fission yeast).